We begin with the raw amino-acid sequence, 452 residues long: Phosphoglucosamine mutase (452 aa).

The active-site Phosphoserine intermediate is the serine 112. Mg(2+) is bound by residues serine 112, aspartate 251, aspartate 253, and aspartate 255. At serine 112 the chain carries Phosphoserine.

The protein belongs to the phosphohexose mutase family. Mg(2+) serves as cofactor. Activated by phosphorylation.

The catalysed reaction is alpha-D-glucosamine 1-phosphate = D-glucosamine 6-phosphate. Catalyzes the conversion of glucosamine-6-phosphate to glucosamine-1-phosphate. The sequence is that of Phosphoglucosamine mutase from Bordetella pertussis (strain Tohama I / ATCC BAA-589 / NCTC 13251).